The following is a 426-amino-acid chain: Protein FAM181B (426 aa).

2 disordered regions span residues 106-157 and 226-246; these read GLMG…AAAA and NLPP…CGPS. A compositionally biased stretch (low complexity) spans 128–141; that stretch reads PLAAPSAPTVAAPA.

It belongs to the FAM181 family.

The polypeptide is Protein FAM181B (FAM181B) (Homo sapiens (Human)).